Consider the following 723-residue polypeptide: Malonamoyl-CoA synthetase vrtB (723 aa).

This sequence belongs to the ATP-dependent AMP-binding enzyme family.

The protein operates within secondary metabolite biosynthesis; terpenoid biosynthesis. Functionally, malonamoyl-CoA synthetase; part of the gene cluster that mediates the biosynthesis of viridicatumtoxin, a tetracycline-like fungal meroterpenoid with a unique, fused spirobicyclic ring system. The first step of the pathway is the production of the malonamoyl-CoA starter unit for the polyketide synthase vrtA. The aldolase vrtJ may be involved in the synthesis of the malonamate substrate for malonamoyl-CoA synthetase vrtB. The polyketide synthase vrtA then may utilize the malonamoyl-CoA starter unit, followed by sequential condensation of eight malonyl-CoA units to form the polyketide backbone. The cyclization of the last ring could be mediated by the lactamase-like protein vrtG. The proposed post-PKS tailoring steps are a hydroxylation at C5 catalyzed the cytochrome P450 monooxygenase vrtE, a hydroxylation at C12a catalyzed by VrtH and/or VrtI, and an O-methylation by the O-methyltransferase vrtF. VrtC is then proposed to catalyze the transfer of a geranyl group synthesized by vrtD to the aromatic C ring of the tetracyclic polyketide intermediate of viridicatumtoxin to yield previridicatumtoxin. Finally, the cytochrome P450 monooxygenase vrtK catalyzes the spirocyclization of the geranyl moiety of previridicatumtoxin to afford viridicatumtoxin. The chain is Malonamoyl-CoA synthetase vrtB from Penicillium aethiopicum.